The sequence spans 349 residues: 4-hydroxythreonine-4-phosphate dehydrogenase (349 aa).

Substrate-binding residues include H141 and T142. The a divalent metal cation site is built by H176, H221, and H276. Residues K284, N293, and R302 each coordinate substrate.

Belongs to the PdxA family. As to quaternary structure, homodimer. Zn(2+) serves as cofactor. The cofactor is Mg(2+). Requires Co(2+) as cofactor.

It is found in the cytoplasm. The enzyme catalyses 4-(phosphooxy)-L-threonine + NAD(+) = 3-amino-2-oxopropyl phosphate + CO2 + NADH. Its pathway is cofactor biosynthesis; pyridoxine 5'-phosphate biosynthesis; pyridoxine 5'-phosphate from D-erythrose 4-phosphate: step 4/5. Its function is as follows. Catalyzes the NAD(P)-dependent oxidation of 4-(phosphooxy)-L-threonine (HTP) into 2-amino-3-oxo-4-(phosphooxy)butyric acid which spontaneously decarboxylates to form 3-amino-2-oxopropyl phosphate (AHAP). This chain is 4-hydroxythreonine-4-phosphate dehydrogenase, found in Methylorubrum extorquens (strain CM4 / NCIMB 13688) (Methylobacterium extorquens).